Consider the following 173-residue polypeptide: NADH-ubiquinone oxidoreductase chain 6 (173 aa).

A run of 5 helical transmembrane segments spans residues 1 to 21 (MTYL…AVAS), 24 to 44 (APYF…GVLV), 53 to 73 (LVLF…SAAL), 86 to 106 (SVVG…GVFW), and 139 to 159 (YGGG…FVVL).

This sequence belongs to the complex I subunit 6 family.

It is found in the mitochondrion membrane. The enzyme catalyses a ubiquinone + NADH + 5 H(+)(in) = a ubiquinol + NAD(+) + 4 H(+)(out). In terms of biological role, core subunit of the mitochondrial membrane respiratory chain NADH dehydrogenase (Complex I) that is believed to belong to the minimal assembly required for catalysis. Complex I functions in the transfer of electrons from NADH to the respiratory chain. The immediate electron acceptor for the enzyme is believed to be ubiquinone. This chain is NADH-ubiquinone oxidoreductase chain 6 (MT-ND6), found in Formosania lacustris (Oriental stream loach).